Consider the following 33-residue polypeptide: Gastrin (33 aa).

Positions 1–21 (ELEPQGPPHLGTDLSKKQGPW) are disordered. Gln18 is modified (pyrrolidone carboxylic acid). Tyr28 carries the sulfotyrosine modification. The residue at position 33 (Phe33) is a Phenylalanine amide.

Belongs to the gastrin/cholecystokinin family.

Its subcellular location is the secreted. Gastrin stimulates the stomach mucosa to produce and secrete hydrochloric acid and the pancreas to secrete its digestive enzymes. It also stimulates smooth muscle contraction and increases blood circulation and water secretion in the stomach and intestine. This is Gastrin (GAST) from Chinchilla chinchilla (Short-tailed chinchilla).